Consider the following 136-residue polypeptide: Large ribosomal subunit protein uL16c (136 aa).

It belongs to the universal ribosomal protein uL16 family. As to quaternary structure, part of the 50S ribosomal subunit.

Its subcellular location is the plastid. It localises to the chloroplast. This is Large ribosomal subunit protein uL16c from Buxus microphylla (Littleleaf boxwood).